We begin with the raw amino-acid sequence, 599 residues long: Purine-uracil permease NCS1 (599 aa).

12 helical membrane passes run 140–160, 164–184, 218–238, 257–277, 293–313, 327–347, 363–383, 411–433, 445–465, 474–494, 525–545, and 560–580; these read LWIGLVVGVPTYYLAGSLVDL, WWQGIATVVTANLILLVPLVL, LVGCGWYGIETWIGGEAIFLL, TSPLEFSCFIVFWLAQLCIVW, ILISLTSCLLAWSYLKAGGFG, FWTLFFPSLTANISFWATLAL, IIGQVGLPVFMGLFTFVGVAV, TLLAIVGISLATLTTNIAANVVA, FFTFGRGAFLTAVLGIVFQPW, FVYTWLIGYSALLGPIGGIIL, YNVAAVVALVAGIIPVVPGFL, and VVYDNALFFSFIIAGFVYWII.

The protein belongs to the purine-cytosine permease (2.A.39) family. In terms of tissue distribution, expressed in roots, leaves, stems, flowers, siliques and seeds.

The protein resides in the plastid. The protein localises to the chloroplast envelope. Its subcellular location is the chloroplast membrane. Functionally, nucleobase-proton symporter that facilitates the uptake of nucleobases in the cells. Can transport adenine, guanine and uracil. Contributes to uracil import into plastids for plastidic uracil salvage which is essential for plant growth and development. This chain is Purine-uracil permease NCS1, found in Arabidopsis thaliana (Mouse-ear cress).